The following is a 444-amino-acid chain: Tubulin beta-9 chain (444 aa).

Gln-11, Glu-69, Ser-138, Gly-142, Thr-143, Gly-144, Asn-204, and Asn-226 together coordinate GTP. Glu-69 contributes to the Mg(2+) binding site.

It belongs to the tubulin family. As to quaternary structure, dimer of alpha and beta chains. A typical microtubule is a hollow water-filled tube with an outer diameter of 25 nm and an inner diameter of 15 nM. Alpha-beta heterodimers associate head-to-tail to form protofilaments running lengthwise along the microtubule wall with the beta-tubulin subunit facing the microtubule plus end conferring a structural polarity. Microtubules usually have 13 protofilaments but different protofilament numbers can be found in some organisms and specialized cells. Interacts with TFCA. It depends on Mg(2+) as a cofactor.

It is found in the cytoplasm. It localises to the cytoskeleton. Tubulin is the major constituent of microtubules, a cylinder consisting of laterally associated linear protofilaments composed of alpha- and beta-tubulin heterodimers. Microtubules grow by the addition of GTP-tubulin dimers to the microtubule end, where a stabilizing cap forms. Below the cap, tubulin dimers are in GDP-bound state, owing to GTPase activity of alpha-tubulin. The sequence is that of Tubulin beta-9 chain (TUBB9) from Arabidopsis thaliana (Mouse-ear cress).